The sequence spans 357 residues: Queuosine-tRNA galactosyltransferase (357 aa).

The protein belongs to the glycosyltransferase 2 family.

Its subcellular location is the cytoplasm. It catalyses the reaction queuosine(34) in tRNA(Tyr) + UDP-alpha-D-galactose = O-5''-beta-D-galactosylqueuosine(34) in tRNA(Tyr) + UDP + H(+). Glycosyltransferase that specifically catalyzes galactosylation of cytoplasmic tRNA(Tyr) modified with queuosine at position 34 (queuosine(34)). Galactosylates the cyclopentene hydroxyl group of queuosine(34) in tRNA(Tyr) to form galactosyl-queuosine(34). Mannosylation of queuosine(34) in tRNA(Tyr) is required to slow-down elongation at cognate codons UAC and suppress stop codon readthrough, thereby regulating protein translation. The chain is Queuosine-tRNA galactosyltransferase from Rattus norvegicus (Rat).